The primary structure comprises 349 residues: sn-glycerol-3-phosphate import ATP-binding protein UgpC (349 aa).

One can recognise an ABC transporter domain in the interval 4–235; sequence VTLTAVRKVY…PASTFVASFM (232 aa). 37 to 44 serves as a coordination point for ATP; that stretch reads GPSGCGKS.

The protein belongs to the ABC transporter superfamily. sn-glycerol-3-phosphate importer (TC 3.A.1.1.3) family. In terms of assembly, the complex is composed of two ATP-binding proteins (UgpC), two transmembrane proteins (UgpA and UgpE) and a solute-binding protein (UgpB).

Its subcellular location is the cell inner membrane. It carries out the reaction sn-glycerol 3-phosphate(out) + ATP + H2O = sn-glycerol 3-phosphate(in) + ADP + phosphate + H(+). Part of the ABC transporter complex UgpBAEC involved in sn-glycerol-3-phosphate (G3P) import. Responsible for energy coupling to the transport system. In Jannaschia sp. (strain CCS1), this protein is sn-glycerol-3-phosphate import ATP-binding protein UgpC.